The sequence spans 380 residues: Cytochrome b (380 aa).

The next 4 membrane-spanning stretches (helical) occupy residues 34–54, 78–99, 114–134, and 179–199; these read FGSL…LLAM, WLIR…YLHI, WNTG…GYVL, and FFAL…IHLT. Heme b-binding residues include histidine 84 and histidine 98. Residues histidine 183 and histidine 197 each coordinate heme b. Histidine 202 contacts a ubiquinone. Helical transmembrane passes span 227-247, 289-309, 321-341, and 348-368; these read LKDI…ALFS, LGGV…PFLH, LSQL…WVGS, and FIII…ILFP.

It belongs to the cytochrome b family. As to quaternary structure, the cytochrome bc1 complex contains 11 subunits: 3 respiratory subunits (MT-CYB, CYC1 and UQCRFS1), 2 core proteins (UQCRC1 and UQCRC2) and 6 low-molecular weight proteins (UQCRH/QCR6, UQCRB/QCR7, UQCRQ/QCR8, UQCR10/QCR9, UQCR11/QCR10 and a cleavage product of UQCRFS1). This cytochrome bc1 complex then forms a dimer. Requires heme b as cofactor.

It is found in the mitochondrion inner membrane. Its function is as follows. Component of the ubiquinol-cytochrome c reductase complex (complex III or cytochrome b-c1 complex) that is part of the mitochondrial respiratory chain. The b-c1 complex mediates electron transfer from ubiquinol to cytochrome c. Contributes to the generation of a proton gradient across the mitochondrial membrane that is then used for ATP synthesis. The protein is Cytochrome b (MT-CYB) of Pterodroma hypoleuca (Bonin petrel).